Consider the following 678-residue polypeptide: UvrABC system protein C (678 aa).

Residues Val16–Ile95 enclose the GIY-YIG domain. In terms of domain architecture, UVR spans Asp208 to Ala243. The span at Glu649 to Ala667 shows a compositional bias: low complexity. Residues Glu649–Gly678 are disordered.

Belongs to the UvrC family. Interacts with UvrB in an incision complex.

The protein localises to the cytoplasm. Its function is as follows. The UvrABC repair system catalyzes the recognition and processing of DNA lesions. UvrC both incises the 5' and 3' sides of the lesion. The N-terminal half is responsible for the 3' incision and the C-terminal half is responsible for the 5' incision. In Mycolicibacterium gilvum (strain PYR-GCK) (Mycobacterium gilvum (strain PYR-GCK)), this protein is UvrABC system protein C.